The chain runs to 442 residues: Tryptophan synthase beta chain 2 (442 aa).

Residue Lys122 is modified to N6-(pyridoxal phosphate)lysine.

Belongs to the TrpB family. Tetramer of two alpha and two beta chains. Requires pyridoxal 5'-phosphate as cofactor.

It carries out the reaction (1S,2R)-1-C-(indol-3-yl)glycerol 3-phosphate + L-serine = D-glyceraldehyde 3-phosphate + L-tryptophan + H2O. Its pathway is amino-acid biosynthesis; L-tryptophan biosynthesis; L-tryptophan from chorismate: step 5/5. In terms of biological role, the beta subunit is responsible for the synthesis of L-tryptophan from indole and L-serine. The sequence is that of Tryptophan synthase beta chain 2 (trpB2) from Methanosarcina mazei (strain ATCC BAA-159 / DSM 3647 / Goe1 / Go1 / JCM 11833 / OCM 88) (Methanosarcina frisia).